The following is a 303-amino-acid chain: tRNA dimethylallyltransferase (303 aa).

13 to 20 (GPTASGKS) is an ATP binding site. 15–20 (TASGKS) provides a ligand contact to substrate. 2 interaction with substrate tRNA regions span residues 38–41 (DSMQ) and 162–166 (QRLLR).

This sequence belongs to the IPP transferase family. In terms of assembly, monomer. Mg(2+) is required as a cofactor.

The catalysed reaction is adenosine(37) in tRNA + dimethylallyl diphosphate = N(6)-dimethylallyladenosine(37) in tRNA + diphosphate. In terms of biological role, catalyzes the transfer of a dimethylallyl group onto the adenine at position 37 in tRNAs that read codons beginning with uridine, leading to the formation of N6-(dimethylallyl)adenosine (i(6)A). The chain is tRNA dimethylallyltransferase from Methylocella silvestris (strain DSM 15510 / CIP 108128 / LMG 27833 / NCIMB 13906 / BL2).